Here is a 505-residue protein sequence, read N- to C-terminus: ATP synthase subunit alpha (505 aa).

Position 169–176 (169–176 (GDRKTGKT)) interacts with ATP.

Belongs to the ATPase alpha/beta chains family. F-type ATPases have 2 components, CF(1) - the catalytic core - and CF(0) - the membrane proton channel. CF(1) has five subunits: alpha(3), beta(3), gamma(1), delta(1), epsilon(1). CF(0) has three main subunits: a(1), b(2) and c(9-12). The alpha and beta chains form an alternating ring which encloses part of the gamma chain. CF(1) is attached to CF(0) by a central stalk formed by the gamma and epsilon chains, while a peripheral stalk is formed by the delta and b chains.

The protein resides in the cell membrane. The catalysed reaction is ATP + H2O + 4 H(+)(in) = ADP + phosphate + 5 H(+)(out). Produces ATP from ADP in the presence of a proton gradient across the membrane. The alpha chain is a regulatory subunit. This Pediococcus pentosaceus (strain ATCC 25745 / CCUG 21536 / LMG 10740 / 183-1w) protein is ATP synthase subunit alpha.